A 117-amino-acid chain; its full sequence is uncharacterized protein (117 aa).

This is an uncharacterized protein from Acidianus two-tailed virus (ATV).